Here is a 200-residue protein sequence, read N- to C-terminus: ATP synthase subunit b (200 aa).

Residues I12–G32 traverse the membrane as a helical segment.

It belongs to the ATPase B chain family. As to quaternary structure, F-type ATPases have 2 components, F(1) - the catalytic core - and F(0) - the membrane proton channel. F(1) has five subunits: alpha(3), beta(3), gamma(1), delta(1), epsilon(1). F(0) has three main subunits: a(1), b(2) and c(10-14). The alpha and beta chains form an alternating ring which encloses part of the gamma chain. F(1) is attached to F(0) by a central stalk formed by the gamma and epsilon chains, while a peripheral stalk is formed by the delta and b chains.

It is found in the cell inner membrane. In terms of biological role, f(1)F(0) ATP synthase produces ATP from ADP in the presence of a proton or sodium gradient. F-type ATPases consist of two structural domains, F(1) containing the extramembraneous catalytic core and F(0) containing the membrane proton channel, linked together by a central stalk and a peripheral stalk. During catalysis, ATP synthesis in the catalytic domain of F(1) is coupled via a rotary mechanism of the central stalk subunits to proton translocation. Functionally, component of the F(0) channel, it forms part of the peripheral stalk, linking F(1) to F(0). The chain is ATP synthase subunit b from Trichlorobacter lovleyi (strain ATCC BAA-1151 / DSM 17278 / SZ) (Geobacter lovleyi).